Reading from the N-terminus, the 163-residue chain is NADH-quinone oxidoreductase subunit I (163 aa).

4Fe-4S ferredoxin-type domains follow at residues 54–84 (LRRYPNGEERCIACKLCEAVCPANAITIESE) and 94–123 (IVYDIDLFKCIFCGFCEEACPVDAIVETQI). [4Fe-4S] cluster is bound by residues C64, C67, C70, C74, C103, C106, C109, and C113.

It belongs to the complex I 23 kDa subunit family. NDH-1 is composed of 14 different subunits. Subunits NuoA, H, J, K, L, M, N constitute the membrane sector of the complex. [4Fe-4S] cluster is required as a cofactor.

It localises to the cell inner membrane. The enzyme catalyses a quinone + NADH + 5 H(+)(in) = a quinol + NAD(+) + 4 H(+)(out). Functionally, NDH-1 shuttles electrons from NADH, via FMN and iron-sulfur (Fe-S) centers, to quinones in the respiratory chain. The immediate electron acceptor for the enzyme in this species is believed to be ubiquinone. Couples the redox reaction to proton translocation (for every two electrons transferred, four hydrogen ions are translocated across the cytoplasmic membrane), and thus conserves the redox energy in a proton gradient. In Ruthia magnifica subsp. Calyptogena magnifica, this protein is NADH-quinone oxidoreductase subunit I.